The chain runs to 221 residues: Endo-1,4-beta-xylanase 1 (221 aa).

The N-terminal stretch at 1–22 (MKFFATIAALVVAAVAAPVAEA) is a signal peptide. The region spanning 29–221 (PMLIERAGPG…GTGSASVTVS (193 aa)) is the GH11 domain. E114 serves as the catalytic Nucleophile. E208 serves as the catalytic Proton donor.

This sequence belongs to the glycosyl hydrolase 11 (cellulase G) family.

The protein resides in the secreted. It carries out the reaction Endohydrolysis of (1-&gt;4)-beta-D-xylosidic linkages in xylans.. It functions in the pathway glycan degradation; xylan degradation. Endo-1,4-beta-xylanase involved in the hydrolysis of xylan, a major structural heterogeneous polysaccharide found in plant biomass representing the second most abundant polysaccharide in the biosphere, after cellulose. Hydrolyzes xylans from oat spelt and birchwood at similar rates, but it has no detectable activity toward Avicel or carboxymethyl cellulose. In Aureobasidium pullulans (Black yeast), this protein is Endo-1,4-beta-xylanase 1 (xynI).